The chain runs to 128 residues: Ribosome-binding factor A (128 aa).

The protein belongs to the RbfA family. Monomer. Binds 30S ribosomal subunits, but not 50S ribosomal subunits or 70S ribosomes.

The protein resides in the cytoplasm. Functionally, one of several proteins that assist in the late maturation steps of the functional core of the 30S ribosomal subunit. Associates with free 30S ribosomal subunits (but not with 30S subunits that are part of 70S ribosomes or polysomes). Required for efficient processing of 16S rRNA. May interact with the 5'-terminal helix region of 16S rRNA. This chain is Ribosome-binding factor A, found in Geobacillus thermodenitrificans (strain NG80-2).